The sequence spans 949 residues: MDLVYGLVWLLTVLLEGISGQGVYAPPTVRIVHSGLACNIEEERYSERVYTIREGETLELTCLVTGHPRPQIRWTKTAGSASDRFQDSSVFNETLRITNIQRHQGGRYYCKAENGLGSPAIKSIRVDVYYLDDPVVTVHQSIGEAKEQFYYERTVFLRCVANSNPPVRYSWRRGQEVLLQGSDKGVEIYEPFFTQGETKILKLKNLRPQDYANYSCIASVRNVCNIPDKMVSFRLSNKTASPSIKLLVDDPIVVNPGEAITLVCVTTGGEPTPSLTWVRSFGTLPEKIVLNGGTLTIPAITSDDAGTYSCIANNNVGNPAKKSTNIIVRALKKGRFWITPDPYHKDDNIQIGREVKISCQVEAVPSEELTFSWFKNGRPLRSSERMVITQTDPDVSPGTTNLDIIDLKFTDFGTYTCVASLKGGGISDISIDVNISSSTVPPNLTVPQEKSPLVTREGDTIELQCQVTGKPKPIILWSRADKEVAMPDGTMQMESYDGTLRIVNVSREMSGMYRCQTSQYNGFNVKPREALVQLIVQYPPAVEPAFLEIRQGQDRSVTMSCRVLRAYPIRVLTYEWRLGNKLLRTGQFDSQEYTEYPLKSLSNENYGVYNCSIINEAGAGRCSFLVTGKAYAPEFYYDTYNPVWQNRHRVYSYSLQWTQMNPDAVDRIVAYRLGIRQAGQQRWWEQEIKINGNIQKGELITYNLTELIKPEAYEVRLTPLTKFGEGDSTIRVIKYTGEFHCGFEDGNICLFTQDDTDNFDWTKQSTATRNTKYTPNTGPSADRSGSKEGFYMYIETSRPRLEGEKARLLSPVFSIAPKNPYGPTNSAYCFSFFYHMYGQHIGVLNVYLRLKGQTTIENPLWSSSGNKGQRWNEAHVNIYPITSFQLIFEGIRGPGIEGDIAIDDVSIAEGECAKQDLPTKNSVDGAVGILVHIWLFPVIILISILSPRR.

The N-terminal stretch at 1–25 (MDLVYGLVWLLTVLLEGISGQGVYA) is a signal peptide. 2 Ig-like domains span residues 27 to 127 (PTVR…IRVD) and 134 to 232 (PVVT…KMVS). 2 disulfides stabilise this stretch: Cys-62–Cys-110 and Cys-159–Cys-216. N-linked (GlcNAc...) asparagine glycosylation is found at Asn-92, Asn-213, and Asn-237. Ig-like domains are found at residues 242–328 (PSIK…NIIV), 340–436 (PDPY…VNIS), 442–533 (PNLT…ALVQ), and 540–627 (PAVE…FLVT). 2 disulfide bridges follow: Cys-264/Cys-310 and Cys-359/Cys-417. N-linked (GlcNAc...) asparagine glycosylation is found at Asn-434, Asn-443, Asn-504, Asn-610, and Asn-703. 2 cysteine pairs are disulfide-bonded: Cys-465–Cys-515 and Cys-561–Cys-611. Positions 638–738 (DTYNPVWQNR…TIRVIKYTGE (101 aa)) constitute a Fibronectin type-III domain. Residues 739-914 (FHCGFEDGNI…VSIAEGECAK (176 aa)) form the MAM domain. Asp-924 is lipidated: GPI-anchor amidated aspartate. A propeptide spans 925-949 (GAVGILVHIWLFPVIILISILSPRR) (removed in mature form).

In terms of assembly, interacts (through the Ig-like domains) with NLGN2.

Its subcellular location is the cell membrane. In terms of biological role, may be involved in cell-cell interactions. This is MAM domain-containing glycosylphosphatidylinositol anchor protein 2 (Mdga2) from Mus musculus (Mouse).